Reading from the N-terminus, the 391-residue chain is MASSVATLVKSLDKINAADFESDEAARVNAIAAAQKMIHRLQSGVERGIELTHQRSTVFPIIDVFEDLGLWEAWASQGHEISLEGLAQLSNTPLALNLLRRLCRLLTAADIFEEKSEDCYTPTELSLYMGDKTKGSQVSQGSAPGWVGSYTNLPIFLKETAYQEPLDPKKSAYSKTAGKSFWEELSQDPLQQENFGRFMSSWAKFKVPWPAFYDTESLVRGAEPGMPILVDIGGNDGTDVERFLAKHPGVAAGSLILQDRPAALKLAKVDQKIELMPHDFFTPQPVIGSRAYFFHAVLHDWDDAHALDILRNTVPAMRKGYSKLLILDIAIPRTGASLIQAAMDISMMSLLSSLERPITTWEILLKKAGLKIVKFWPDPRRYETLIEAELE.

S-adenosyl-L-methionine contacts are provided by residues 233-234, Asp-259, and 279-280; these read GG and DF. The Proton acceptor role is filled by His-299.

It belongs to the class I-like SAM-binding methyltransferase superfamily. Cation-independent O-methyltransferase family. COMT subfamily.

It functions in the pathway mycotoxin biosynthesis. O-methyltransferase; part of the core atranone cluster (CAC) which products are predicted to catalyze most or all steps of mycotoxin atranone synthesis, starting from geranylgeranyl pyrophosphate (GGPP). The initial cyclization of GGPP to dolabellane is probably performed by the terpene cyclase ATR13. The Baeyer-Villiger oxidation near the end of the atranone synthesis, which converts atranones D and E to atranones F and G is predicted to be catalyzed by the monooxygenase ATR8. Of the CAC's other predicted gene products, the reducing PKS ATR6 might synthesize a polyketide chain. This polyketide is probably transferred onto the atranone backbone by the polyketide transferase ATR5. Other predicted CAC products include 4 oxygenases (ATR2, ATR3, ATR4, and ATR14), 3 short-chain reductases (ATR7, ATR9, and ATR10), and a methyltransferase (ATR12). These may all be involved in the various steps of atranone biosynthesis, although their specific roles must await experimental determination. The protein is O-methyltransferase ATR12 of Stachybotrys chlorohalonatus (strain IBT 40285).